The primary structure comprises 245 residues: 1-(5-phosphoribosyl)-5-[(5-phosphoribosylamino)methylideneamino] imidazole-4-carboxamide isomerase (245 aa).

Catalysis depends on Asp8, which acts as the Proton acceptor. The Proton donor role is filled by Asp131.

The protein belongs to the HisA/HisF family.

It localises to the cytoplasm. The catalysed reaction is 1-(5-phospho-beta-D-ribosyl)-5-[(5-phospho-beta-D-ribosylamino)methylideneamino]imidazole-4-carboxamide = 5-[(5-phospho-1-deoxy-D-ribulos-1-ylimino)methylamino]-1-(5-phospho-beta-D-ribosyl)imidazole-4-carboxamide. Its pathway is amino-acid biosynthesis; L-histidine biosynthesis; L-histidine from 5-phospho-alpha-D-ribose 1-diphosphate: step 4/9. The sequence is that of 1-(5-phosphoribosyl)-5-[(5-phosphoribosylamino)methylideneamino] imidazole-4-carboxamide isomerase from Neisseria gonorrhoeae (strain ATCC 700825 / FA 1090).